A 328-amino-acid chain; its full sequence is Flotillin-like protein FloA (328 aa).

2 consecutive transmembrane segments (helical) span residues 9 to 29 (LLIT…VPVG) and 30 to 50 (LWIS…IGMR).

This sequence belongs to the flotillin-like FloA family. In terms of assembly, homooligomerizes.

It localises to the cell membrane. The protein resides in the membrane raft. In terms of biological role, found in functional membrane microdomains (FMM) that may be equivalent to eukaryotic membrane rafts. FMMs are highly dynamic and increase in number as cells age. Flotillins are thought to be important factors in membrane fluidity. This chain is Flotillin-like protein FloA, found in Exiguobacterium sp. (strain ATCC BAA-1283 / AT1b).